The following is a 50-amino-acid chain: Large ribosomal subunit protein bL33B (50 aa).

Belongs to the bacterial ribosomal protein bL33 family.

In Enterococcus faecalis (strain ATCC 700802 / V583), this protein is Large ribosomal subunit protein bL33B (rpmG2).